The sequence spans 583 residues: Kelch-like protein 38 (583 aa).

Residues 34–101 form the BTB domain; the sequence is TDVILCTEDK…IYTGSITITM (68 aa). The region spanning 136 to 237 is the BACK domain; the sequence is CLSMIRLSEI…HPTYLFQFIA (102 aa). 6 Kelch repeats span residues 285–332, 333–385, 386–433, 435–481, 482–523, and 525–575; these read TLVV…CIHS, ILYV…SYLH, FIFA…ANDQ, IYVF…VIED, KIYI…VINN, and LYVT…PLIC.

In Danio rerio (Zebrafish), this protein is Kelch-like protein 38 (klhl38).